We begin with the raw amino-acid sequence, 147 residues long: Low molecular weight protein-tyrosine-phosphatase Wzb (147 aa).

The active-site Nucleophile is the cysteine 9. Arginine 15 is an active-site residue. Residue aspartate 115 is the Proton donor of the active site.

This sequence belongs to the low molecular weight phosphotyrosine protein phosphatase family.

It catalyses the reaction O-phospho-L-tyrosyl-[protein] + H2O = L-tyrosyl-[protein] + phosphate. The protein operates within glycan metabolism; exopolysaccharide biosynthesis. Dephosphorylates Wzc. Required for the extracellular polysaccharide colanic acid synthesis. Probably involved in the export of colanic acid from the cell to medium. Involved in protection of cells against contact-dependent growth inhibition (CDI). This is Low molecular weight protein-tyrosine-phosphatase Wzb (wzb) from Escherichia coli O157:H7.